A 378-amino-acid polypeptide reads, in one-letter code: Mas-related G-protein coupled receptor MRG (378 aa).

The Extracellular portion of the chain corresponds to 1-77; the sequence is MVWGKICWFS…VGQQALPLNI (77 aa). N-linked (GlcNAc...) asparagine glycosylation is found at asparagine 54 and asparagine 57. The helical transmembrane segment at 78–101 threads the bilayer; sequence IAPKAVLVSLCGVLLNGTVFWLLC. The Cytoplasmic segment spans residues 102-109; sequence CGATNPYM. The helical transmembrane segment at 110-136 threads the bilayer; it reads VYILHLVAADVIYLCCSAVGFLQVTLL. The Extracellular segment spans residues 137 to 154; sequence TYHGVVFFIPDFLAILSP. A helical transmembrane segment spans residues 155 to 169; sequence FSFEVCLCLLVAIST. The Cytoplasmic segment spans residues 170–191; the sequence is ERCVCVLFPIWYRCHRPKYTSN. A helical membrane pass occupies residues 192 to 207; that stretch reads VVCTLIWGLPFCINIV. Over 208 to 221 the chain is Extracellular; sequence KSLFLTYWKHVKAC. Residues 222–248 form a helical membrane-spanning segment; the sequence is VIFLKLSGLFHAILSLVMCVSSLTLLI. The Cytoplasmic segment spans residues 249–264; it reads RFLCCSQQQKATRVYA. Residues 265–286 traverse the membrane as a helical segment; that stretch reads VVQISAPMFLLWALPLSVAPLI. Topologically, residues 287–297 are extracellular; sequence TDFKMFVTTSY. A helical membrane pass occupies residues 298 to 317; that stretch reads LISLFLIINSSANPIIYFFV. Residues 318-378 lie on the Cytoplasmic side of the membrane; it reads GSLRKKRLKE…PREHRVDVET (61 aa). The segment at 344–378 is disordered; the sequence is GRNKKAAGIDPMEQPHSTQHVENLLPREHRVDVET. The span at 368-378 shows a compositional bias: basic and acidic residues; it reads LPREHRVDVET.

Belongs to the G-protein coupled receptor 1 family. Mas subfamily.

Its subcellular location is the cell membrane. The chain is Mas-related G-protein coupled receptor MRG (MAS1L) from Homo sapiens (Human).